The chain runs to 189 residues: Mediator of RNA polymerase II transcription subunit 28 (189 aa).

Positions 75–115 form a coiled coil; it reads YMLIKDENQDLSIEIQRKEALLQKHYNRLEEWKACLSDIQQ. The segment at 124–147 is disordered; the sequence is PIGSGMLQGPGGGMPPMGGTPPRP. Positions 129–139 are enriched in gly residues; sequence MLQGPGGGMPP.

This sequence belongs to the Mediator complex subunit 28 family. In terms of assembly, component of the Mediator complex, which includes at least CDK8, MED4, MED6, MED11, MED14, MED17, MED18, MED20, MED21, MED22, MED27, MED28, MED30 and MED31.

Its subcellular location is the nucleus. Its function is as follows. Component of the Mediator complex, a coactivator involved in the regulated transcription of nearly all RNA polymerase II-dependent genes. Mediator functions as a bridge to convey information from gene-specific regulatory proteins to the basal RNA polymerase II transcription machinery. Mediator is recruited to promoters by direct interactions with regulatory proteins and serves as a scaffold for the assembly of a functional preinitiation complex with RNA polymerase II and the general transcription factors. In Drosophila melanogaster (Fruit fly), this protein is Mediator of RNA polymerase II transcription subunit 28 (MED28).